The sequence spans 259 residues: Thiazole synthase (259 aa).

The active-site Schiff-base intermediate with DXP is the Lys98. Residues Gly159, 185–186, and 207–208 contribute to the 1-deoxy-D-xylulose 5-phosphate site; these read AG and NS.

Belongs to the ThiG family. Homotetramer. Forms heterodimers with either ThiH or ThiS.

The protein resides in the cytoplasm. It catalyses the reaction [ThiS sulfur-carrier protein]-C-terminal-Gly-aminoethanethioate + 2-iminoacetate + 1-deoxy-D-xylulose 5-phosphate = [ThiS sulfur-carrier protein]-C-terminal Gly-Gly + 2-[(2R,5Z)-2-carboxy-4-methylthiazol-5(2H)-ylidene]ethyl phosphate + 2 H2O + H(+). Its pathway is cofactor biosynthesis; thiamine diphosphate biosynthesis. Catalyzes the rearrangement of 1-deoxy-D-xylulose 5-phosphate (DXP) to produce the thiazole phosphate moiety of thiamine. Sulfur is provided by the thiocarboxylate moiety of the carrier protein ThiS. In vitro, sulfur can be provided by H(2)S. The protein is Thiazole synthase of Chlorobium phaeobacteroides (strain BS1).